The primary structure comprises 819 residues: Leucine--tRNA ligase (819 aa).

The 'HIGH' region signature appears at 40–51; the sequence is PYPSGAGLHVGH. Residues 600–604 carry the 'KMSKS' region motif; that stretch reads KMSKS. ATP is bound at residue Lys-603.

It belongs to the class-I aminoacyl-tRNA synthetase family.

Its subcellular location is the cytoplasm. The catalysed reaction is tRNA(Leu) + L-leucine + ATP = L-leucyl-tRNA(Leu) + AMP + diphosphate. The polypeptide is Leucine--tRNA ligase (Chlamydia muridarum (strain MoPn / Nigg)).